The sequence spans 88 residues: Small ribosomal subunit protein uS17 (88 aa).

This sequence belongs to the universal ribosomal protein uS17 family. As to quaternary structure, part of the 30S ribosomal subunit.

Its function is as follows. One of the primary rRNA binding proteins, it binds specifically to the 5'-end of 16S ribosomal RNA. The chain is Small ribosomal subunit protein uS17 from Nitrosospira multiformis (strain ATCC 25196 / NCIMB 11849 / C 71).